We begin with the raw amino-acid sequence, 171 residues long: Ribosome maturation factor RimM (171 aa).

The PRC barrel domain maps to 96-169 (EGEFFIADMI…KMIIDPIKGM (74 aa)).

Belongs to the RimM family. In terms of assembly, binds ribosomal protein uS19.

The protein resides in the cytoplasm. An accessory protein needed during the final step in the assembly of 30S ribosomal subunit, possibly for assembly of the head region. Essential for efficient processing of 16S rRNA. May be needed both before and after RbfA during the maturation of 16S rRNA. It has affinity for free ribosomal 30S subunits but not for 70S ribosomes. The polypeptide is Ribosome maturation factor RimM (Clostridioides difficile (strain 630) (Peptoclostridium difficile)).